Reading from the N-terminus, the 62-residue chain is Negative regulatory protein YxlE (62 aa).

The next 2 helical transmembrane spans lie at 7-27 (MILP…ISCI) and 37-57 (WMWA…FFTV).

The protein resides in the cell membrane. Its function is as follows. Together with YxlD is important for negative regulation of sigma Y activity. The polypeptide is Negative regulatory protein YxlE (yxlE) (Bacillus subtilis (strain 168)).